The chain runs to 499 residues: Glycerol kinase (499 aa).

Threonine 13 contacts ADP. Threonine 13, threonine 14, and serine 15 together coordinate ATP. Threonine 13 is a sn-glycerol 3-phosphate binding site. Arginine 17 contacts ADP. 4 residues coordinate sn-glycerol 3-phosphate: arginine 83, glutamate 84, tyrosine 135, and aspartate 245. Glycerol-binding residues include arginine 83, glutamate 84, tyrosine 135, aspartate 245, and glutamine 246. Residues threonine 267 and glycine 310 each contribute to the ADP site. Residues threonine 267, glycine 310, glutamine 314, and glycine 411 each coordinate ATP. ADP is bound by residues glycine 411 and asparagine 415.

The protein belongs to the FGGY kinase family.

The catalysed reaction is glycerol + ATP = sn-glycerol 3-phosphate + ADP + H(+). It functions in the pathway polyol metabolism; glycerol degradation via glycerol kinase pathway; sn-glycerol 3-phosphate from glycerol: step 1/1. With respect to regulation, inhibited by fructose 1,6-bisphosphate (FBP). Key enzyme in the regulation of glycerol uptake and metabolism. Catalyzes the phosphorylation of glycerol to yield sn-glycerol 3-phosphate. The sequence is that of Glycerol kinase from Xanthomonas campestris pv. campestris (strain ATCC 33913 / DSM 3586 / NCPPB 528 / LMG 568 / P 25).